The chain runs to 866 residues: N-alpha-acetyltransferase 15, NatA auxiliary subunit (866 aa).

TPR repeat units follow at residues 46-79 (GETLAMKGLTLNCLGKKEEAYELVRRGLRNDLKS), 80-113 (HVCWHVYGLLQRSDKKYDEAIKCYRNALKWDKDN), 148-184 (RASWIGYAIAYHLLEDYEMAAKILEEFRKTQQTSPDK), and 224-257 (LAVEETKGELLLQLCRLEDAADVYRGLQERNPEN). Residue Lys-262 is modified to N6-acetyllysine. Ser-302 bears the Phosphoserine mark. 3 TPR repeats span residues 374–407 (LWVQYYLAQHYDKIGQPSIALEYINTAIESTPTL), 409–441 (ELFLVKAKIYKHAGNIKEAARWMDEAQALDTAD), and 485–522 (MWFQTECAQAYKAMNKFGEALKKCYEIERHFIEITDDQ). The interval 500 to 866 (KFGEALKKCY…AEAEELANEI (367 aa)) is interaction with HYPK. Residues Ser-537 and Ser-588 each carry the phosphoserine modification. Over residues 579-594 (EHEADTANMSDKELKK) the composition is skewed to basic and acidic residues. The disordered stretch occupies residues 579–642 (EHEADTANMS…EEIGGPKEEL (64 aa)). Over residues 595–604 (LRNKQRRAQK) the composition is skewed to basic residues. Positions 606–621 (AQIEEEKKNAEKEKQQ) are enriched in basic and acidic residues. The TPR 8 repeat unit spans residues 672 to 705 (IETHLFAFEIYFRKEKFLLMLQSVKRAFAIDSSH). N6-acetyllysine is present on residues Lys-735 and Lys-756. Phosphoserine occurs at positions 855 and 856.

Component of the N-terminal acetyltransferase A (NatA) complex composed of NAA10 or probably NAA11 and NAA15. Interacts with XRCC6, NAA50 and XRCC5. Associates with HYPK when in a complex with NAA10. Interaction with HYPK reduces the capacity to interact with NAA50. Post-translationally, cleaved by caspases during apoptosis.

It localises to the cytoplasm. It is found in the nucleus. Auxillary subunit of the N-terminal acetyltransferase A (NatA) complex which displays alpha (N-terminal) acetyltransferase activity. The NAT activity may be important for vascular, hematopoietic and neuronal growth and development. Required to control retinal neovascularization in adult ocular endothelial cells. In complex with XRCC6 and XRCC5 (Ku80), up-regulates transcription from the osteocalcin promoter. The sequence is that of N-alpha-acetyltransferase 15, NatA auxiliary subunit (NAA15) from Pongo abelii (Sumatran orangutan).